The sequence spans 342 residues: tRNA N6-adenosine threonylcarbamoyltransferase (342 aa).

Positions 111 and 115 each coordinate Fe cation. Substrate is bound by residues 134–138 (LVSGG), Asp167, Gly180, and Asn277. Asp305 lines the Fe cation pocket.

It belongs to the KAE1 / TsaD family. It depends on Fe(2+) as a cofactor.

The protein resides in the cytoplasm. The enzyme catalyses L-threonylcarbamoyladenylate + adenosine(37) in tRNA = N(6)-L-threonylcarbamoyladenosine(37) in tRNA + AMP + H(+). Required for the formation of a threonylcarbamoyl group on adenosine at position 37 (t(6)A37) in tRNAs that read codons beginning with adenine. Is involved in the transfer of the threonylcarbamoyl moiety of threonylcarbamoyl-AMP (TC-AMP) to the N6 group of A37, together with TsaE and TsaB. TsaD likely plays a direct catalytic role in this reaction. The chain is tRNA N6-adenosine threonylcarbamoyltransferase from Haemophilus influenzae (strain ATCC 51907 / DSM 11121 / KW20 / Rd).